The primary structure comprises 163 residues: Nucleotide-binding protein KPK_4305 (163 aa).

The protein belongs to the YajQ family.

Its function is as follows. Nucleotide-binding protein. The protein is Nucleotide-binding protein KPK_4305 of Klebsiella pneumoniae (strain 342).